Reading from the N-terminus, the 678-residue chain is Glycine--tRNA ligase beta subunit (678 aa).

Belongs to the class-II aminoacyl-tRNA synthetase family. Tetramer of two alpha and two beta subunits.

It localises to the cytoplasm. It carries out the reaction tRNA(Gly) + glycine + ATP = glycyl-tRNA(Gly) + AMP + diphosphate. This is Glycine--tRNA ligase beta subunit from Streptococcus pneumoniae (strain Taiwan19F-14).